Reading from the N-terminus, the 411-residue chain is Glycogen synthase kinase-3 homolog MsK-3 (411 aa).

Positions 74-358 (YMAERVVGHG…ALEALVHPFY (285 aa)) constitute a Protein kinase domain. Residues 80–88 (VGHGSFGVV) and Lys-103 contribute to the ATP site. Residue Asp-199 is the Proton acceptor of the active site. Tyr-234 bears the Phosphotyrosine mark.

The protein belongs to the protein kinase superfamily. CMGC Ser/Thr protein kinase family. GSK-3 subfamily. Absent in leaves and petioles, very low levels are seen in the stems and roots while a moderate expression is seen in the nodes.

The catalysed reaction is L-seryl-[protein] + ATP = O-phospho-L-seryl-[protein] + ADP + H(+). The enzyme catalyses L-threonyl-[protein] + ATP = O-phospho-L-threonyl-[protein] + ADP + H(+). This chain is Glycogen synthase kinase-3 homolog MsK-3 (MSK-3), found in Medicago sativa (Alfalfa).